Reading from the N-terminus, the 66-residue chain is DNA gyrase inhibitor YacG (66 aa).

Residues Cys-9, Cys-12, Cys-28, and Cys-32 each coordinate Zn(2+).

The protein belongs to the DNA gyrase inhibitor YacG family. In terms of assembly, interacts with GyrB. The cofactor is Zn(2+).

Its function is as follows. Inhibits all the catalytic activities of DNA gyrase by preventing its interaction with DNA. Acts by binding directly to the C-terminal domain of GyrB, which probably disrupts DNA binding by the gyrase. This chain is DNA gyrase inhibitor YacG, found in Pseudomonas fluorescens (strain SBW25).